Reading from the N-terminus, the 154-residue chain is MRKIIIPIITILLIALDQLSKLWIVKHIELNQIKEFIPNIVSLTYLRNYGAAFSILQNQQWLFTLITIFVVCVAIIYLMKHINGSYWLLISLTLIISGGLGNFIDRLRLGYVVDMVHLDFINFAIFNVADSYLTIGIICLMIALWKEESNGNHN.

The next 3 membrane-spanning stretches (helical) occupy residues 4–24, 62–82, and 84–104; these read IIIPIITILLIALDQLSKLWI, LFTLITIFVVCVAIIYLMKHI, and GSYWLLISLTLIISGGLGNFI. Active-site residues include Asp-114 and Asp-130. Residues 125–145 form a helical membrane-spanning segment; that stretch reads IFNVADSYLTIGIICLMIALW.

It belongs to the peptidase A8 family.

It is found in the cell membrane. The catalysed reaction is Release of signal peptides from bacterial membrane prolipoproteins. Hydrolyzes -Xaa-Yaa-Zaa-|-(S,diacylglyceryl)Cys-, in which Xaa is hydrophobic (preferably Leu), and Yaa (Ala or Ser) and Zaa (Gly or Ala) have small, neutral side chains.. Its pathway is protein modification; lipoprotein biosynthesis (signal peptide cleavage). Its function is as follows. This protein specifically catalyzes the removal of signal peptides from prolipoproteins. The chain is Lipoprotein signal peptidase from Streptococcus agalactiae serotype Ia (strain ATCC 27591 / A909 / CDC SS700).